A 393-amino-acid chain; its full sequence is METTVGTLGENTTNTFTDFFSARDGSGAETSPLPFTFSYGDYDMPSDEEEDVTNSRTFFAAKIVIGMALVGIMLVCGIGNFIFITALARYKKLRNLTNLLIANLAISDFLVAIVCCPFEMDYYVVRQLSWEHGHVLCASVNYLRTVSLYVSTNALLAIAIDRYLAIVHPLRPRMKCQTAAGLIFLVWSVSILIAIPAAYFTTETVLVIVESQEKIFCGQIWPVDQQFYYRSYFLLVFGLEFVGPVIAMTLCYARVSRELWFKAVPGFQTEQIRRRLRCRRRTVLGLVCVLSAYVLCWAPFYGFTIVRDFFPSVFVKEKHYLTAFYVVECIAMSNSMINTLCFVTVRNNTSKYLKRILRLQWRASPSGSKASADLDLRTTGIPATEEVDCIRLK.

The Extracellular portion of the chain corresponds to M1–K62. Residue N11 is glycosylated (N-linked (GlcNAc...) asparagine). Residues I63–F83 traverse the membrane as a helical segment. The Cytoplasmic segment spans residues I84–N98. A helical transmembrane segment spans residues L99–E119. Residues M120–T145 are Extracellular-facing. C137 and C217 are oxidised to a cystine. The chain crosses the membrane as a helical span at residues V146–I166. Residues V167–A179 lie on the Cytoplasmic side of the membrane. The helical transmembrane segment at A180–F200 threads the bilayer. Topologically, residues T201–Y232 are extracellular. A helical transmembrane segment spans residues F233 to A253. At R254–T282 the chain is on the cytoplasmic side. The helical transmembrane segment at V283–F303 threads the bilayer. The Extracellular portion of the chain corresponds to T304–T322. A helical transmembrane segment spans residues A323 to V343. The Cytoplasmic portion of the chain corresponds to T344–K393.

It belongs to the G-protein coupled receptor 1 family. As to expression, widely expressed in peripheral tissues with the highest level in the spleen and moderate levels in the adipose tissues, thymus, lung, kidney, testis, uterus and small intestine.

It is found in the cell membrane. Its function is as follows. Receptor for prokineticin 1. Exclusively coupled to the G(q) subclass of heteromeric G proteins. Activation leads to mobilization of calcium, stimulation of phosphoinositide turnover and activation of p44/p42 mitogen-activated protein kinase. May play a role during early pregnancy. The protein is Prokineticin receptor 1 (Prokr1) of Rattus norvegicus (Rat).